A 109-amino-acid chain; its full sequence is Large ribosomal subunit protein uL23 (109 aa).

This sequence belongs to the universal ribosomal protein uL23 family. Part of the 50S ribosomal subunit. Contacts protein L29, and trigger factor when it is bound to the ribosome.

Functionally, one of the early assembly proteins it binds 23S rRNA. One of the proteins that surrounds the polypeptide exit tunnel on the outside of the ribosome. Forms the main docking site for trigger factor binding to the ribosome. This is Large ribosomal subunit protein uL23 from Prosthecochloris aestuarii (strain DSM 271 / SK 413).